We begin with the raw amino-acid sequence, 497 residues long: uncharacterized protein (497 aa).

2 consecutive ABC transporter domains span residues Val9–Ala247 and Ala256–Ala496. Gly41–Ser48 is an ATP binding site.

It belongs to the ABC transporter superfamily. Ribose importer (TC 3.A.1.2.1) family.

The protein localises to the cell membrane. In terms of biological role, probably part of the binding-protein-dependent transport system y4mIJK. This system probably transports a sugar. Probably responsible for energy coupling to the transport system. This is an uncharacterized protein from Sinorhizobium fredii (strain NBRC 101917 / NGR234).